A 475-amino-acid polypeptide reads, in one-letter code: METARLFKLVCVICIASLIPTIRANVADETDEYWVNKANEARKHTLMAYHPDPYEIVDHFHERHYDNSTDVEGTEEEKAVASEEEDVIEMISSPTNSTRRSLTGRGKGKGKGKWSKLTGPCTASNPIDKCWRCQPDWARRRKKLVHCVRGFGYRTTGGKRGRIYVVTSPRDDDMVNPRPGTLRHAVIQKEPLWIVFKHDMSIRLSQELMITSDKTIDARGANVHIAYGAGITMQYVHNIIIHGLHVHHIVKSSGGLIRDSINHFGHRGEADGDGISIFGATNIWLDHISMSKCQDGLIDAIMGSTAITISNSHFTHHNDVMLLGAQNNNMDDKKMQVTVAYNHFGKGLVQRMPRVRWGFVHVVNNDYTHWELYAIGGSQGPTILSHGNRFIAPPHKQHYREVTKRDYASESEWKNWNWRSEKDVFMNNAYFRQSGNPHFKCSHSRQQMIKPKNGMAVSKLTKYAGALDCRVGKAC.

Residues 1-24 (METARLFKLVCVICIASLIPTIRA) form the signal peptide. 2 N-linked (GlcNAc...) asparagine glycosylation sites follow: Asn67 and Asn96. Positions 91-117 (ISSPTNSTRRSLTGRGKGKGKGKWSKL) are disordered. Ca(2+)-binding residues include Asp271, Asp295, and Asp299. Arg351 is an active-site residue.

It belongs to the polysaccharide lyase 1 family. Requires Ca(2+) as cofactor.

The enzyme catalyses Eliminative cleavage of (1-&gt;4)-alpha-D-galacturonan to give oligosaccharides with 4-deoxy-alpha-D-galact-4-enuronosyl groups at their non-reducing ends.. It participates in glycan metabolism; pectin degradation; 2-dehydro-3-deoxy-D-gluconate from pectin: step 2/5. The protein is Probable pectate lyase 7 of Arabidopsis thaliana (Mouse-ear cress).